Reading from the N-terminus, the 1249-residue chain is Clustered mitochondria protein homolog (1249 aa).

Residues 1 to 34 (MAQTNGELEHSKAETPEQLTNGNHPEETQEEEQN) form a disordered region. In terms of domain architecture, Clu spans 321–565 (DITRSQENYL…RVTPLDVMWQ (245 aa)). Disordered regions lie at residues 610-638 (VETA…EALD) and 874-907 (VPAT…PEKP). Residues 613-638 (ASKEKSEENAESKEEGSEEKSEEALD) show a composition bias toward basic and acidic residues. TPR repeat units lie at residues 975-1008 (AKLY…TERT), 1017-1050 (ILSY…WKII), and 1059-1092 (ITTM…CESL). The span at 1178-1191 (TRTLGTKVQPQVGQ) shows a compositional bias: polar residues. Residues 1178 to 1249 (TRTLGTKVQP…KLRGSKKSSA (72 aa)) form a disordered region. A compositionally biased stretch (low complexity) spans 1192–1205 (SAPSASGASSANPS).

The protein belongs to the CLU family. May associate with the eukaryotic translation initiation factor 3 (eIF-3) complex.

The protein resides in the cytoplasm. In terms of biological role, mRNA-binding protein involved in proper cytoplasmic distribution of mitochondria. The chain is Clustered mitochondria protein homolog from Aspergillus oryzae (strain ATCC 42149 / RIB 40) (Yellow koji mold).